The primary structure comprises 250 residues: Probable transcriptional regulatory protein Paes_0496 (250 aa).

It belongs to the TACO1 family.

The protein localises to the cytoplasm. This Prosthecochloris aestuarii (strain DSM 271 / SK 413) protein is Probable transcriptional regulatory protein Paes_0496.